Reading from the N-terminus, the 376-residue chain is Chaperone protein DnaJ (376 aa).

A J domain is found at 5 to 70; that stretch reads DYYEVLGVAK…QKRAAYDQYG (66 aa). The CR-type zinc-finger motif lies at 136–214; the sequence is GYDTQIRVPS…CHGSGKVKET (79 aa). Residues Cys149, Cys152, Cys166, Cys169, Cys188, Cys191, Cys202, and Cys205 each coordinate Zn(2+). 4 CXXCXGXG motif repeats span residues 149–156, 166–173, 188–195, and 202–209; these read CGICHGSG, CPTCHGQG, CPKCHGTG, and CVHCHGSG.

Belongs to the DnaJ family. As to quaternary structure, homodimer. Zn(2+) is required as a cofactor.

It is found in the cytoplasm. Functionally, participates actively in the response to hyperosmotic and heat shock by preventing the aggregation of stress-denatured proteins and by disaggregating proteins, also in an autonomous, DnaK-independent fashion. Unfolded proteins bind initially to DnaJ; upon interaction with the DnaJ-bound protein, DnaK hydrolyzes its bound ATP, resulting in the formation of a stable complex. GrpE releases ADP from DnaK; ATP binding to DnaK triggers the release of the substrate protein, thus completing the reaction cycle. Several rounds of ATP-dependent interactions between DnaJ, DnaK and GrpE are required for fully efficient folding. Also involved, together with DnaK and GrpE, in the DNA replication of plasmids through activation of initiation proteins. The polypeptide is Chaperone protein DnaJ (Burkholderia thailandensis (strain ATCC 700388 / DSM 13276 / CCUG 48851 / CIP 106301 / E264)).